We begin with the raw amino-acid sequence, 385 residues long: Queuine tRNA-ribosyltransferase (385 aa).

Asp92 serves as the catalytic Proton acceptor. Substrate-binding positions include 92–96, Asp146, Gln188, and Gly215; that span reads DSGGF. Residues 246 to 252 are RNA binding; sequence GVGHPED. Asp265 serves as the catalytic Nucleophile. The interval 270 to 274 is RNA binding; important for wobble base 34 recognition; it reads TRTGR. Positions 303, 305, 308, and 334 each coordinate Zn(2+).

It belongs to the queuine tRNA-ribosyltransferase family. Homodimer. Within each dimer, one monomer is responsible for RNA recognition and catalysis, while the other monomer binds to the replacement base PreQ1. Zn(2+) is required as a cofactor.

It carries out the reaction 7-aminomethyl-7-carbaguanine + guanosine(34) in tRNA = 7-aminomethyl-7-carbaguanosine(34) in tRNA + guanine. Its pathway is tRNA modification; tRNA-queuosine biosynthesis. Catalyzes the base-exchange of a guanine (G) residue with the queuine precursor 7-aminomethyl-7-deazaguanine (PreQ1) at position 34 (anticodon wobble position) in tRNAs with GU(N) anticodons (tRNA-Asp, -Asn, -His and -Tyr). Catalysis occurs through a double-displacement mechanism. The nucleophile active site attacks the C1' of nucleotide 34 to detach the guanine base from the RNA, forming a covalent enzyme-RNA intermediate. The proton acceptor active site deprotonates the incoming PreQ1, allowing a nucleophilic attack on the C1' of the ribose to form the product. After dissociation, two additional enzymatic reactions on the tRNA convert PreQ1 to queuine (Q), resulting in the hypermodified nucleoside queuosine (7-(((4,5-cis-dihydroxy-2-cyclopenten-1-yl)amino)methyl)-7-deazaguanosine). The chain is Queuine tRNA-ribosyltransferase from Thermus thermophilus (strain ATCC 27634 / DSM 579 / HB8).